The sequence spans 169 residues: Fumarase E (169 aa).

It belongs to the MtlR/FumE family.

The enzyme catalyses (S)-malate = fumarate + H2O. In terms of biological role, in vitro catalyzes the addition of water to fumarate, forming malate. Cannot catalyze the reverse reaction. Cannot use the cis-isomer maleate as substrate. This chain is Fumarase E, found in Escherichia coli (strain K12).